Here is a 146-residue protein sequence, read N- to C-terminus: 3-dehydroquinate dehydratase (146 aa).

Tyr22 (proton acceptor) is an active-site residue. Positions 74, 80, and 87 each coordinate substrate. The active-site Proton donor is His100. Substrate is bound by residues 101-102 and Arg111; that span reads LS.

It belongs to the type-II 3-dehydroquinase family. Homododecamer.

It catalyses the reaction 3-dehydroquinate = 3-dehydroshikimate + H2O. The protein operates within metabolic intermediate biosynthesis; chorismate biosynthesis; chorismate from D-erythrose 4-phosphate and phosphoenolpyruvate: step 3/7. Its function is as follows. Catalyzes a trans-dehydration via an enolate intermediate. The chain is 3-dehydroquinate dehydratase from Clostridium perfringens (strain 13 / Type A).